Here is a 564-residue protein sequence, read N- to C-terminus: Kelch-like protein 12 (564 aa).

The BTB domain maps to cysteine 29–valine 96. The region spanning cysteine 131–isoleucine 232 is the BACK domain. 6 Kelch repeats span residues valine 278–aspartate 325, valine 327–aspartate 375, methionine 376–glycine 422, leucine 423–aspartate 469, isoleucine 471–glycine 516, and leucine 518–glutamate 563.

Component of the BCR(KLHL12) E3 ubiquitin ligase complex.

The protein resides in the cytoplasmic vesicle. It is found in the COPII-coated vesicle. The protein operates within protein modification; protein ubiquitination. In terms of biological role, substrate-specific adapter of a BCR (BTB-CUL3-RBX1) E3 ubiquitin ligase complex that acts as a negative regulator of Wnt signaling pathway and ER-Golgi transport. The BCR(KLHL12) complex is involved in ER-Golgi transport by regulating the size of COPII coats, thereby playing a key role in collagen export, which is required for embryonic stem (ES) cells division. Negatively regulates the Wnt signaling pathway, possibly via the targeted ubiquitination and subsequent proteolysis of dvl2 and dvl3. Regulates convergent-extension movements during early embryonic development. In Danio rerio (Zebrafish), this protein is Kelch-like protein 12 (klhl12).